The primary structure comprises 242 residues: Stress response regulator protein 1 (242 aa).

The 119-residue stretch at 118 to 236 (NFLLVDDNFI…FDHIITCIEK (119 aa)) folds into the Response regulatory domain. Aspartate 169 carries the post-translational modification 4-aspartylphosphate.

In terms of biological role, required for stress adaptation, morphogenesis and virulence. In Debaryomyces hansenii (strain ATCC 36239 / CBS 767 / BCRC 21394 / JCM 1990 / NBRC 0083 / IGC 2968) (Yeast), this protein is Stress response regulator protein 1 (SRR1).